The sequence spans 1141 residues: DNA-directed RNA polymerase subunit beta (1141 aa).

2 stretches are compositionally biased toward acidic residues: residues 1063–1074 (EIEIKEDDDDVS) and 1096–1141 (GGNE…GDEE). Residues 1063 to 1141 (EIEIKEDDDD…VPDEAYGDEE (79 aa)) form a disordered region.

Belongs to the RNA polymerase beta chain family. The RNAP catalytic core consists of 2 alpha, 1 beta, 1 beta' and 1 omega subunit. When a sigma factor is associated with the core the holoenzyme is formed, which can initiate transcription.

The catalysed reaction is RNA(n) + a ribonucleoside 5'-triphosphate = RNA(n+1) + diphosphate. In terms of biological role, DNA-dependent RNA polymerase catalyzes the transcription of DNA into RNA using the four ribonucleoside triphosphates as substrates. The sequence is that of DNA-directed RNA polymerase subunit beta from Moorella thermoacetica (strain ATCC 39073 / JCM 9320).